A 472-amino-acid polypeptide reads, in one-letter code: Glutamate--tRNA ligase (472 aa).

A 'HIGH' region motif is present at residues 10-20 (PSPTGYLHVGG). Zn(2+) is bound by residues Cys99, Cys101, Cys126, and His128. A 'KMSKS' region motif is present at residues 238–242 (KLSKR). Position 241 (Lys241) interacts with ATP.

This sequence belongs to the class-I aminoacyl-tRNA synthetase family. Glutamate--tRNA ligase type 1 subfamily. In terms of assembly, monomer. Requires Zn(2+) as cofactor.

It localises to the cytoplasm. The catalysed reaction is tRNA(Glu) + L-glutamate + ATP = L-glutamyl-tRNA(Glu) + AMP + diphosphate. In terms of biological role, catalyzes the attachment of glutamate to tRNA(Glu) in a two-step reaction: glutamate is first activated by ATP to form Glu-AMP and then transferred to the acceptor end of tRNA(Glu). This Proteus mirabilis (strain HI4320) protein is Glutamate--tRNA ligase.